Reading from the N-terminus, the 744-residue chain is Cullin-1 (744 aa).

A Cullin neddylation domain is found at 674–736; it reads DRRYAIDASI…RDYLERDKDN (63 aa).

The protein belongs to the cullin family. As to quaternary structure, part of a SCF (SKP1-CUL1-F-box protein) E3 ubiquitin-protein ligase complex. Is able to form the SCF complex together with SKP1 and the rice black streaked dwarf virus RBSDV protein P7-2. Interacts with D3. In terms of processing, neddylated (rubylated). Deneddylation occurs upon interaction with the COP9 signalosome (CSN) complex. Expressed in dry seeds and coleoptiles.

In terms of biological role, involved in ubiquitination and subsequent proteasomal degradation of target proteins. In Oryza sativa subsp. japonica (Rice), this protein is Cullin-1.